A 158-amino-acid polypeptide reads, in one-letter code: Snaclec stejaggregin-A subunit alpha (158 aa).

The first 23 residues, 1–23 (MGRFISVSFGLLVVFLSLSGTGA), serve as a signal peptide directing secretion. 3 cysteine pairs are disulfide-bonded: Cys-27–Cys-38, Cys-55–Cys-152, and Cys-127–Cys-144. Positions 34–153 (YDWYCYKPFN…CQAKNPFVCK (120 aa)) constitute a C-type lectin domain.

The protein belongs to the snaclec family. In terms of assembly, heteromultimer; disulfide-linked. In terms of tissue distribution, expressed by the venom gland.

The protein resides in the secreted. Interferes with one step of hemostasis (modulation of platelet aggregation, or coagulation cascade, for example). This is Snaclec stejaggregin-A subunit alpha from Trimeresurus stejnegeri (Chinese green tree viper).